The following is a 118-amino-acid chain: UPF0102 protein lpp3065 (118 aa).

This sequence belongs to the UPF0102 family.

This Legionella pneumophila (strain Paris) protein is UPF0102 protein lpp3065.